Here is a 493-residue protein sequence, read N- to C-terminus: Cyclin-dependent kinase-like 2 (493 aa).

Residues 4 to 287 (YENLGLVGEG…CAELLHHDFF (284 aa)) enclose the Protein kinase domain. ATP is bound by residues 10 to 18 (VGEGSYGMV) and Lys33. The [NKR]KIAxRE signature appears at 45–51 (KKIAMRE). The active-site Proton acceptor is Asp126. The tract at residues 363-384 (GEKAEKGNRASNASCLHDSRTS) is disordered.

This sequence belongs to the protein kinase superfamily. CMGC Ser/Thr protein kinase family. CDC2/CDKX subfamily. Expressed in testis and kidney, and at lower level in brain and lung.

It localises to the cytoplasm. Its subcellular location is the nucleus. The catalysed reaction is L-seryl-[protein] + ATP = O-phospho-L-seryl-[protein] + ADP + H(+). It catalyses the reaction L-threonyl-[protein] + ATP = O-phospho-L-threonyl-[protein] + ADP + H(+). In Homo sapiens (Human), this protein is Cyclin-dependent kinase-like 2.